A 697-amino-acid chain; its full sequence is Elongation factor G (697 aa).

The tr-type G domain occupies 8-283 (EHIRNIGICA…AVVDFLPSPT (276 aa)). Residues 17–24 (AHIDAGKT), 81–85 (DTPGH), and 135–138 (NKMD) contribute to the GTP site.

This sequence belongs to the TRAFAC class translation factor GTPase superfamily. Classic translation factor GTPase family. EF-G/EF-2 subfamily.

Its subcellular location is the cytoplasm. Functionally, catalyzes the GTP-dependent ribosomal translocation step during translation elongation. During this step, the ribosome changes from the pre-translocational (PRE) to the post-translocational (POST) state as the newly formed A-site-bound peptidyl-tRNA and P-site-bound deacylated tRNA move to the P and E sites, respectively. Catalyzes the coordinated movement of the two tRNA molecules, the mRNA and conformational changes in the ribosome. The sequence is that of Elongation factor G from Rickettsia rhipicephali.